The sequence spans 495 residues: Regulator of G-protein signaling 7 (495 aa).

Residues 37-112 (EKNGIPIRTV…DDGTFYRFQT (76 aa)) enclose the DEP domain. 2 positions are modified to phosphoserine: Ser229 and Ser241. A disordered region spans residues 235 to 256 (NDIRSHSPTHTPTPETKPPTED). Phosphothreonine is present on Thr243. The 62-residue stretch at 255 to 316 (EDELQQQIKY…LSDDTTFWEL (62 aa)) folds into the G protein gamma domain. Residues 333–448 (GMDEALKDPV…IRSSAYQELL (116 aa)) enclose the RGS domain. Residue Ser434 is modified to Phosphoserine.

As to quaternary structure, interacts with GNB5, forming the RGS7-GNB5 complex. Interacts with GPR158; promotes the GTPase activator activity of the RGS7-GNB5 complex in absence of glycine, in contrast GTPase activator activity of the RGS7-GNB5 complex is inhibited in presence of glycine. Interacts with GPR179. Interacts with PKD1; this prevents rapid proteasomal degradation. Interacts with RGS7BP, leading to regulate the subcellular location of the heterodimer formed with GNB5. Interacts (phosphorylated form) with 14-3-3 protein YWHAQ. Interacts with SNAPIN. Interacts with GNAI1. Interacts with GNAO1, GNAI3 and GNAZ. Palmitoylated. Post-translationally, ubiquitinated, leading to rapid proteasomal degradation. In terms of processing, phosphorylation and subsequent interaction with 14-3-3 proteins inhibits GAP activity.

The protein localises to the cytoplasm. The protein resides in the cytosol. It localises to the cell membrane. It is found in the membrane. GTPase activator component of the RGS7-GNB5 complex that regulates G protein-coupled receptor signaling cascades. The RGS7-GNB5 complex acts as an inhibitor signal transduction by promoting the GTPase activity of G protein alpha subunits, such as GNAO1, thereby driving them into their inactive GDP-bound form. May play a role in synaptic vesicle exocytosis. Glycine-dependent regulation of the RGS7-GNB5 complex by GPR158 affects mood and cognition via its ability to regulate neuronal excitability in L2/L3 pyramidal neurons of the prefrontal cortex. Modulates the activity of potassium channels that are activated by GNAO1 in response to muscarinic acetylcholine receptor M2/CHRM2 signaling. The polypeptide is Regulator of G-protein signaling 7 (RGS7) (Homo sapiens (Human)).